Here is a 358-residue protein sequence, read N- to C-terminus: MDDYVIRREGKAVFYAPNPKKYDIYSAPVFYNPAMEKNRTLSVLLLKVAGAQMGGGLTVCEPLSGTGIRGIRYVIESGVVGKLILNDLSKEAVHVIQKNLSINGVEADVYNEDANVLLHKLRGQCDVVDVDPFGSPAPFLSAAFRALKNEGIVCATATDTAVLVGRYPRKCLRRYGSVIRKSPFYLEMGLRNLVGYVARIAASEDFAIRPLLSYWEGHYFRTCVYAVKSAKDADDMLQRDVGYVEYRRYRKVTRRQSEYTSGPVWIGELGDPSIAFFMAREGQYSDFLKLLEEEYSVSLPWFYKLPEFAVDGKSPTLEEAMAALRRAGVYAARTHMASDGFKAEATYGEVERVLRRVT.

The Trm1 methyltransferase domain maps to 5-354; that stretch reads VIRREGKAVF…ATYGEVERVL (350 aa). S-adenosyl-L-methionine-binding residues include arginine 39, arginine 69, aspartate 87, aspartate 113, and alanine 114.

This sequence belongs to the class I-like SAM-binding methyltransferase superfamily. Trm1 family.

It catalyses the reaction guanosine(26) in tRNA + 2 S-adenosyl-L-methionine = N(2)-dimethylguanosine(26) in tRNA + 2 S-adenosyl-L-homocysteine + 2 H(+). In terms of biological role, dimethylates a single guanine residue at position 26 of a number of tRNAs using S-adenosyl-L-methionine as donor of the methyl groups. The sequence is that of tRNA (guanine(26)-N(2))-dimethyltransferase from Pyrobaculum calidifontis (strain DSM 21063 / JCM 11548 / VA1).